Consider the following 321-residue polypeptide: MKFVATLIACGLSGLALAAPTATVDSLEKRGPNDAAFGYASLNGGTTGGAGGTTTTVSSYAAFTAAVSSDAKKVVYVSGPIKQSAKQVKVGSNTSIIGKDSTAVLEGFGLLVKEKSNVIIRNLGVKKVLAENGDAIGIQYSNNVWVDHVDVSSDRDHDKDYYDGLIDLTHAADYVTISNCYIHDHWKASLVGHSDNNGDEDTGHLRVTYANNYWSNINSRAPSLRFGTGHVYNSYFENVSDGINTRDGAQVLVESNQFVGSSKALYSTDAGYAVEKDNDFGGAKNTALKGTLTTVPYSYSLVGSSKVKSAVVGQAGQTLKF.

Positions 1 to 18 (MKFVATLIACGLSGLALA) are cleaved as a signal peptide. A glycan (N-linked (GlcNAc...) asparagine) is linked at N93. Positions 134, 163, and 167 each coordinate Ca(2+). Residue R220 is part of the active site. Residue N238 is glycosylated (N-linked (GlcNAc...) asparagine).

The protein belongs to the polysaccharide lyase 1 family. Requires Ca(2+) as cofactor.

It is found in the secreted. The enzyme catalyses Eliminative cleavage of (1-&gt;4)-alpha-D-galacturonan to give oligosaccharides with 4-deoxy-alpha-D-galact-4-enuronosyl groups at their non-reducing ends.. Pectinolytic enzyme consist of four classes of enzymes: pectin lyase, polygalacturonase, pectin methylesterase and rhamnogalacturonase. Among pectinolytic enzymes, pectin lyase is the most important in depolymerization of pectin, since it cleaves internal glycosidic bonds of highly methylated pectins. Favors pectate, the anion, over pectin, the methyl ester. In Neosartorya fischeri (strain ATCC 1020 / DSM 3700 / CBS 544.65 / FGSC A1164 / JCM 1740 / NRRL 181 / WB 181) (Aspergillus fischerianus), this protein is Probable pectate lyase A (plyA).